The primary structure comprises 221 residues: Tetraspanin-2 (221 aa).

The Cytoplasmic segment spans residues 1-13 (MGRFRGGLRCIKY). A helical membrane pass occupies residues 14–34 (LLLGFNLLFWLAGSAVIAFGL). Residues 35-54 (WFRFGGTMKDLSSEDKSPEY) are Extracellular-facing. The helical transmembrane segment at 55-75 (FYVGLYVLVGAGALMMTVGFF) threads the bilayer. The Cytoplasmic portion of the chain corresponds to 76-90 (GCCGAMRESQCVLGS). A helical membrane pass occupies residues 91–111 (FFTCLLVIFAAEVTTGVFAFI). At 112 to 188 (GKDVAIRHVQ…ETVISAKLQL (77 aa)) the chain is on the extracellular side. An N-linked (GlcNAc...) asparagine glycan is attached at Asn-139. The chain crosses the membrane as a helical span at residues 189-209 (IGIVGIGIAGLTIFGMIFSMV). At 210–221 (LCCAIRNSRDVI) the chain is on the cytoplasmic side.

Belongs to the tetraspanin (TM4SF) family.

Its subcellular location is the membrane. Its function is as follows. May play a role in signalling in oligodendrocytes in the early stages of their terminal differentiation into myelin-forming glia and may also function in stabilizing the mature sheath. This Mus musculus (Mouse) protein is Tetraspanin-2 (Tspan2).